We begin with the raw amino-acid sequence, 134 residues long: Crustacean hyperglycemic hormones isoform A (134 aa).

The first 24 residues, 1–24, serve as a signal peptide directing secretion; that stretch reads MMACRTLCLVVVMVASLGTSGVGG. Glutamine 61 bears the Pyrrolidone carboxylic acid mark. Phenylalanine 63 is subject to D-phenylalanine; in form CHH-A-II. Cystine bridges form between cysteine 67–cysteine 103, cysteine 83–cysteine 99, and cysteine 86–cysteine 112. Valine 132 carries the post-translational modification Valine amide.

It belongs to the arthropod CHH/MIH/GIH/VIH hormone family. Stereoinversion of L-Phe (form CHH-A-I) to D-Phe (form CHH-A-II). In terms of tissue distribution, produced by the medulla terminalis X-organ in the eyestalks and transported to the sinus gland where they are stored and released. Present also in the ventral nervous system.

The protein resides in the secreted. Its function is as follows. CHH is the most abundant hormone in the sinus gland of isopods and decapods which controls the blood sugar level. Has a secretagogue action over the amylase released from the midgut gland. May act as a stress hormone. In terms of biological role, MIH may inhibit Y-organs where molting hormone (ecdysteroid) is secreted and a molting cycle is initiated when MIH secretion diminishes or stops. In Homarus americanus (American lobster), this protein is Crustacean hyperglycemic hormones isoform A.